The chain runs to 555 residues: MSEAEARPTNFIRQIIDEDLASGKHTTVHTRFPPEPNGYLHIGHAKSICLNFGIAQDYQGQCNLRFDDTNPVKEDIEYVDSIKNDVEWLGFHWSGDIRYSSDYFDQLHAYAVELINKGLAYVDELTPEQIREYRGTLTAPGKNSPFRDRSVEENLALFEKMRTGGFEEGKACLRAKIDMASPFIVMRDPVLYRIKFAEHHQTGTKWCIYPMYDFTHCISDALEGITHSLCTLEFQDNRRLYDWVLDNITIPVHPRQYEFSRLNLEYTVMSKRKLNLLVTDKHVEGWDDPRMPTISGLRRRGYTAASIREFCKRIGVTKQDNTIEMASLESCIREDLNENAPRAMAVIDPVKLVIENYPQGESEMVTMPNHPNKPEMGSREVPFSGEIWIDRADFREEANKQYKRLVMGKEVRLRNAYVIKAERVEKDAEGNITTIFCTYDADTLSKDPADGRKVKGVIHWVSAAHALPIEIRLYDRLFSVPNPGAAEDFLSVINPESLVIKQGYGEPSLKAAVAGKAFQFEREGYFCLDSRYATADKLVFNRTVGLRDTWAKAGE.

The short motif at 34 to 44 (PEPNGYLHIGH) is the 'HIGH' region element. ATP-binding positions include 35–37 (EPN) and 41–47 (HIGHAKS). 2 residues coordinate L-glutamine: D67 and Y212. ATP-binding positions include T231, 261 to 262 (RL), and 269 to 271 (MSK). The short motif at 268–272 (VMSKR) is the 'KMSKS' region element. The interval 317–324 (TKQDNTIE) is interaction with tRNA.

It belongs to the class-I aminoacyl-tRNA synthetase family. Monomer.

It localises to the cytoplasm. The catalysed reaction is tRNA(Gln) + L-glutamine + ATP = L-glutaminyl-tRNA(Gln) + AMP + diphosphate. The sequence is that of Glutamine--tRNA ligase from Salmonella schwarzengrund (strain CVM19633).